We begin with the raw amino-acid sequence, 486 residues long: Bifunctional protein HldE (486 aa).

Residues 1–331 (MSTNVADLLH…NALTAESVPV (331 aa)) are ribokinase. Residue 207 to 210 (NLGE) coordinates ATP. Residue Asp-276 is part of the active site. The tract at residues 358–486 (VTNGCFDLLH…STTKLIEKGH (129 aa)) is cytidylyltransferase.

This sequence in the N-terminal section; belongs to the carbohydrate kinase PfkB family. It in the C-terminal section; belongs to the cytidylyltransferase family. Homodimer.

It carries out the reaction D-glycero-beta-D-manno-heptose 7-phosphate + ATP = D-glycero-beta-D-manno-heptose 1,7-bisphosphate + ADP + H(+). The enzyme catalyses D-glycero-beta-D-manno-heptose 1-phosphate + ATP + H(+) = ADP-D-glycero-beta-D-manno-heptose + diphosphate. It functions in the pathway nucleotide-sugar biosynthesis; ADP-L-glycero-beta-D-manno-heptose biosynthesis; ADP-L-glycero-beta-D-manno-heptose from D-glycero-beta-D-manno-heptose 7-phosphate: step 1/4. Its pathway is nucleotide-sugar biosynthesis; ADP-L-glycero-beta-D-manno-heptose biosynthesis; ADP-L-glycero-beta-D-manno-heptose from D-glycero-beta-D-manno-heptose 7-phosphate: step 3/4. Its function is as follows. Catalyzes the phosphorylation of D-glycero-D-manno-heptose 7-phosphate at the C-1 position to selectively form D-glycero-beta-D-manno-heptose-1,7-bisphosphate. Catalyzes the ADP transfer from ATP to D-glycero-beta-D-manno-heptose 1-phosphate, yielding ADP-D-glycero-beta-D-manno-heptose. This chain is Bifunctional protein HldE, found in Koribacter versatilis (strain Ellin345).